We begin with the raw amino-acid sequence, 416 residues long: MTHINSALEDADPNIASLIQEESKRQENHLELIASENFTSKAVMEAQGSVLTNKYAEGLPNKRYYGGCEHIDKIEGLAIERAKQLFKAEWANVQPHSGAQANFSVFLSLLEPGEKIMGMDLSHGGHLTHGSPVNVSGKWFKAIHYGVDKETQRLEMENVREIALKNRPKLIICGYSAYPRNIDFLAFRSIADEVGAYLLADMAHIAGLVATGIHPSPIPHCDVVTTTTHKTLRGPRGGLILCRNAEFGKRFDKAVFPGSQGGPLEHVIAAKAVAFGEALKPGFSSYCEQLVKNSKALAKRMQDRGIAVVSNGTDNHIVLLDLRSIDMTGKEADSLVSAINVTTNKNTVPFDPKSPFVTSGLRLGTAALTTRGFDEPAFLEVADLIADRLLNPTDLILKNKCQQRVLDLCNRFPLYD.

Residues leucine 121 and 125-127 (GHL) contribute to the (6S)-5,6,7,8-tetrahydrofolate site. Lysine 230 carries the N6-(pyridoxal phosphate)lysine modification. 354–356 (SPF) provides a ligand contact to (6S)-5,6,7,8-tetrahydrofolate.

The protein belongs to the SHMT family. As to quaternary structure, homodimer. Requires pyridoxal 5'-phosphate as cofactor.

Its subcellular location is the cytoplasm. The catalysed reaction is (6R)-5,10-methylene-5,6,7,8-tetrahydrofolate + glycine + H2O = (6S)-5,6,7,8-tetrahydrofolate + L-serine. Its pathway is one-carbon metabolism; tetrahydrofolate interconversion. The protein operates within amino-acid biosynthesis; glycine biosynthesis; glycine from L-serine: step 1/1. Functionally, catalyzes the reversible interconversion of serine and glycine with tetrahydrofolate (THF) serving as the one-carbon carrier. This reaction serves as the major source of one-carbon groups required for the biosynthesis of purines, thymidylate, methionine, and other important biomolecules. Also exhibits THF-independent aldolase activity toward beta-hydroxyamino acids, producing glycine and aldehydes, via a retro-aldol mechanism. In Prochlorococcus marinus (strain MIT 9211), this protein is Serine hydroxymethyltransferase.